We begin with the raw amino-acid sequence, 393 residues long: Phosphoglycerate kinase (393 aa).

Substrate-binding positions include 21-23, R36, 59-62, R114, and R147; these read DIN and HFGR. ATP-binding positions include K197, E319, and 349 to 352; that span reads GGDT.

Belongs to the phosphoglycerate kinase family. As to quaternary structure, monomer.

It is found in the cytoplasm. It catalyses the reaction (2R)-3-phosphoglycerate + ATP = (2R)-3-phospho-glyceroyl phosphate + ADP. The protein operates within carbohydrate degradation; glycolysis; pyruvate from D-glyceraldehyde 3-phosphate: step 2/5. This Dinoroseobacter shibae (strain DSM 16493 / NCIMB 14021 / DFL 12) protein is Phosphoglycerate kinase.